Here is a 52-residue protein sequence, read N- to C-terminus: ATP synthase protein 8 (52 aa).

A helical transmembrane segment spans residues 6–26 (PINGFVILCSISLMLLTLLIN).

The protein belongs to the ATPase protein 8 family. In terms of assembly, F-type ATPases have 2 components, CF(1) - the catalytic core - and CF(0) - the membrane proton channel.

Its subcellular location is the mitochondrion membrane. Functionally, mitochondrial membrane ATP synthase (F(1)F(0) ATP synthase or Complex V) produces ATP from ADP in the presence of a proton gradient across the membrane which is generated by electron transport complexes of the respiratory chain. F-type ATPases consist of two structural domains, F(1) - containing the extramembraneous catalytic core and F(0) - containing the membrane proton channel, linked together by a central stalk and a peripheral stalk. During catalysis, ATP synthesis in the catalytic domain of F(1) is coupled via a rotary mechanism of the central stalk subunits to proton translocation. Part of the complex F(0) domain. Minor subunit located with subunit a in the membrane. The protein is ATP synthase protein 8 (MT-ATP8) of Albinaria turrita (Door snail).